The primary structure comprises 206 residues: Cell division protein SepF (206 aa).

The segment covering 31 to 53 (EEKERRKTERQEQRQAVKQEKRT) has biased composition (basic and acidic residues). The tract at residues 31–81 (EEKERRKTERQEQRQAVKQEKRTFPSQRPAFSEEAPTSSSSKLSAASGSSD) is disordered. Positions 60–80 (AFSEEAPTSSSSKLSAASGSS) are enriched in low complexity.

This sequence belongs to the SepF family. In terms of assembly, homodimer. Interacts with FtsZ.

The protein localises to the cytoplasm. Cell division protein that is part of the divisome complex and is recruited early to the Z-ring. Probably stimulates Z-ring formation, perhaps through the cross-linking of FtsZ protofilaments. Its function overlaps with FtsA. The protein is Cell division protein SepF of Lachnoclostridium phytofermentans (strain ATCC 700394 / DSM 18823 / ISDg) (Clostridium phytofermentans).